Here is a 5641-residue protein sequence, read N- to C-terminus: Cyclochlorotine synthetase (5641 aa).

The interval 95–124 (PENLNGHLIGSTNGHKKQWENDSADDKRGQ) is disordered. Basic and acidic residues predominate over residues 111-124 (KQWENDSADDKRGQ). Residues 217–622 (FTENVQRYPT…GRRDTQVKIR (406 aa)) are adenylation (A) domain 1. A Carrier 1 domain is found at 816 to 892 (TEEEYKIQTL…DLVSNCKMSA (77 aa)). A thiolation (T) domain 1 region spans residues 821-889 (KIQTLKEIWS…QLSDLVSNCK (69 aa)). Position 853 is an O-(pantetheine 4'-phosphoryl)serine (serine 853). Residues 926-1333 (EDVYPCTPLQ…AHVAEQIGQP (408 aa)) form a condensation (C) domain 1 region. The tract at residues 1390–1768 (DGNLTFEELN…ISRATTQIKI (379 aa)) is adenylation (A) domain 2. The 77-residue stretch at 1902–1978 (IELSEKQENM…QLVMIATELT (77 aa)) folds into the Carrier 2 domain. A thiolation (T) domain 2 region spans residues 1907–1975 (KQENMARLWA…RFDQLVMIAT (69 aa)). Serine 1939 is modified (O-(pantetheine 4'-phosphoryl)serine). A condensation (C) domain 2 region spans residues 2022-2438 (DIYACTPFQE…DLASEQDLAK (417 aa)). Residues 2459–2859 (AEKARQHPNK…GRADTQVKLR (401 aa)) form an adenylation (A) domain 3 region. Positions 2976 to 3052 (GPLTEMETTL…GMAIKIQPIH (77 aa)) constitute a Carrier 3 domain. The tract at residues 2977–3049 (PLTEMETTLA…NLAGMAIKIQ (73 aa)) is thiolation (T) domain 3. Serine 3013 bears the O-(pantetheine 4'-phosphoryl)serine mark. The segment at 3089 to 3482 (DIYPCTPLQV…LETVLSAFST (394 aa)) is condensation (C) domain 3. The tract at residues 3523–3873 (VQRAPDKVAI…IARKDLQVKL (351 aa)) is adenylation (A) domain 4. Residues 4005 to 4081 (IPSTPTEMKM…ELATKIAPRI (77 aa)) form the Carrier 4 domain. The tract at residues 4010-4078 (TEMKMQQLWA…RLSELATKIA (69 aa)) is thiolation (T) domain 4. Serine 4042 carries the post-translational modification O-(pantetheine 4'-phosphoryl)serine. A condensation (C) domain 4 region spans residues 4123–4549 (KDVYPCTPLQ…QSLDSLSQQD (427 aa)). The tract at residues 4574–4982 (QEIAGRHPDA…GRIGTDIKLR (409 aa)) is adenylation (A) domain 5. In terms of domain architecture, Carrier 5 spans 5118 to 5194 (PPSTQEEKVI…SLAEKISWES (77 aa)). Residues 5123 to 5191 (EEKVIAALWA…KLASLAEKIS (69 aa)) form a thiolation (T) domain 5 region. Serine 5155 bears the O-(pantetheine 4'-phosphoryl)serine mark. The tract at residues 5260 to 5556 (AYLDIGPDVQ…DKCTTCVSGS (297 aa)) is condensation (C) domain 5.

This sequence belongs to the NRP synthetase family.

It functions in the pathway mycotoxin biosynthesis. In terms of biological role, nonribosomal peptide synthetase; part of the gene cluster that mediates the biosynthesis of the mycotoxin cyclochlorotine, a hepatotoxic and carcinogenic cyclic chlorinated pentapeptide. Within the pathway, The NRPS cctN initially catalyzes the condensation of L-serine (Ser), Pro, L-2-aminobutyrate (2Abu), Ser, and beta-Phe in this order. During the chain elongation, side-chain hydroxy group of Ser4 would be used as a nucleophile, giving isocyclotine as a product of terminal condensation-like (CT) domain-catalyzed cyclization. After the dichlorination of Pro2 catalyzed by cctP2 to produce isocyclochlorotine, the cctO-mediated transacylation of isocyclochlorotine can furnish cyclochlorotine. The subsequent hydroxylation of cyclochlorotine by cctR yields hydroxycyclochlorotine as the final product. CctP1 probably acts as a phenylalanine aminomutase and provides the uncommon building block beta-Phe. Furthermore, 2Abu can be synthesized from threonine by one of the threonine dehydratases and transaminases localized outside of the cluster. The functions of the remaining proteins encoded by the cluster, cctM and cctT, have not been identified yet. In Talaromyces islandicus (Penicillium islandicum), this protein is Cyclochlorotine synthetase.